The chain runs to 238 residues: 4-hydroxy-tetrahydrodipicolinate reductase (238 aa).

12–17 provides a ligand contact to NAD(+); sequence GASGRM. Arg-40 lines the NADP(+) pocket. NAD(+) is bound by residues 93 to 95 and 117 to 120; these read GTT and ASNF. The active-site Proton donor/acceptor is the His-149. His-150 contacts (S)-2,3,4,5-tetrahydrodipicolinate. The active-site Proton donor is the Lys-153. A (S)-2,3,4,5-tetrahydrodipicolinate-binding site is contributed by 159–160; it reads GT.

This sequence belongs to the DapB family.

The protein resides in the cytoplasm. The enzyme catalyses (S)-2,3,4,5-tetrahydrodipicolinate + NAD(+) + H2O = (2S,4S)-4-hydroxy-2,3,4,5-tetrahydrodipicolinate + NADH + H(+). It carries out the reaction (S)-2,3,4,5-tetrahydrodipicolinate + NADP(+) + H2O = (2S,4S)-4-hydroxy-2,3,4,5-tetrahydrodipicolinate + NADPH + H(+). It participates in amino-acid biosynthesis; L-lysine biosynthesis via DAP pathway; (S)-tetrahydrodipicolinate from L-aspartate: step 4/4. In terms of biological role, catalyzes the conversion of 4-hydroxy-tetrahydrodipicolinate (HTPA) to tetrahydrodipicolinate. This is 4-hydroxy-tetrahydrodipicolinate reductase from Xanthomonas euvesicatoria pv. vesicatoria (strain 85-10) (Xanthomonas campestris pv. vesicatoria).